The sequence spans 747 residues: Cysteine--tRNA ligase, cytoplasmic (747 aa).

Positions 1-25 are disordered; sequence MTDSWERGKGRRTQPPWSAPNTQAQ. Residues 15–25 are compositionally biased toward polar residues; the sequence is PPWSAPNTQAQ. C54 is a Zn(2+) binding site. Residue G55 coordinates L-cysteine. Positions 56–66 match the 'HIGH' region motif; that stretch reads PTVYDASHMGH. L-cysteine is bound at residue T95. Residues 100–103 carry the 'KIIK' region motif; sequence KIIK. Positions 347, 372, and 376 each coordinate Zn(2+). H372 contributes to the L-cysteine binding site. Residues 405–409 carry the 'KMSKS' region motif; the sequence is KMSKS. K408 contributes to the ATP binding site. Basic and acidic residues predominate over residues 651 to 683; the sequence is EEKRKAEEEKQRKKEEAARKKQQQEAAKLEKMK. The tract at residues 651 to 722 is disordered; the sequence is EEKRKAEEEK…KELSKGQSKK (72 aa).

The protein belongs to the class-I aminoacyl-tRNA synthetase family. Homodimer. Zn(2+) is required as a cofactor.

The protein localises to the cytoplasm. The enzyme catalyses tRNA(Cys) + L-cysteine + ATP = L-cysteinyl-tRNA(Cys) + AMP + diphosphate. Its function is as follows. Catalyzes the ATP-dependent ligation of cysteine to tRNA(Cys). The chain is Cysteine--tRNA ligase, cytoplasmic (cars1) from Xenopus tropicalis (Western clawed frog).